The chain runs to 414 residues: Esterase FrsA (414 aa).

Belongs to the FrsA family.

It catalyses the reaction a carboxylic ester + H2O = an alcohol + a carboxylate + H(+). Catalyzes the hydrolysis of esters. This is Esterase FrsA from Salmonella choleraesuis (strain SC-B67).